Here is an 814-residue protein sequence, read N- to C-terminus: Threonine--tRNA ligase 2, cytoplasmic (814 aa).

Residues 2 to 72 (AAHIAQRLTV…SLREEQERAR (71 aa)) are a coiled coil. The segment at 62-142 (RSLREEQERA…GHKQEGPCAP (81 aa)) is disordered. Basic and acidic residues-rich tracts occupy residues 63–72 (SLREEQERAR), 88–102 (EEPK…EKGQ), and 119–137 (GNKK…HKQE). The 63-residue stretch at 172–234 (KPIKITLADG…EQDSNVELLK (63 aa)) folds into the TGS domain. Residues 798 to 804 (KLKTLKK) carry the Nuclear localization signal motif.

This sequence belongs to the class-II aminoacyl-tRNA synthetase family.

It is found in the cytoplasm. The protein resides in the nucleus. It carries out the reaction tRNA(Thr) + L-threonine + ATP = L-threonyl-tRNA(Thr) + AMP + diphosphate + H(+). Its function is as follows. Catalyzes the attachment of threonine to tRNA(Thr) in a two-step reaction: threonine is first activated by ATP to form Thr-AMP and then transferred to the acceptor end of tRNA(Thr). Also edits incorrectly charged tRNA(Thr) via its editing domain, at the post-transfer stage. This is Threonine--tRNA ligase 2, cytoplasmic (tars3) from Xenopus tropicalis (Western clawed frog).